Here is a 229-residue protein sequence, read N- to C-terminus: 3-isopropylmalate dehydratase small subunit (229 aa).

The segment at 208–229 is disordered; that stretch reads KIESAREPDDDWTGPLADRGII.

It belongs to the LeuD family. LeuD type 1 subfamily. In terms of assembly, heterodimer of LeuC and LeuD.

It carries out the reaction (2R,3S)-3-isopropylmalate = (2S)-2-isopropylmalate. The protein operates within amino-acid biosynthesis; L-leucine biosynthesis; L-leucine from 3-methyl-2-oxobutanoate: step 2/4. In terms of biological role, catalyzes the isomerization between 2-isopropylmalate and 3-isopropylmalate, via the formation of 2-isopropylmaleate. In Bifidobacterium longum subsp. infantis (strain ATCC 15697 / DSM 20088 / JCM 1222 / NCTC 11817 / S12), this protein is 3-isopropylmalate dehydratase small subunit.